The chain runs to 447 residues: Tubulin beta chain (447 aa).

8 residues coordinate GTP: Q11, E69, S138, G142, T143, G144, N204, and N226. Residue E69 participates in Mg(2+) binding. The disordered stretch occupies residues 424 to 447 (QYQDAGVDEEEEEYEEEAPLEGEE). Residues 429–447 (GVDEEEEEYEEEAPLEGEE) are compositionally biased toward acidic residues.

It belongs to the tubulin family. In terms of assembly, dimer of alpha and beta chains. A typical microtubule is a hollow water-filled tube with an outer diameter of 25 nm and an inner diameter of 15 nM. Alpha-beta heterodimers associate head-to-tail to form protofilaments running lengthwise along the microtubule wall with the beta-tubulin subunit facing the microtubule plus end conferring a structural polarity. Microtubules usually have 13 protofilaments but different protofilament numbers can be found in some organisms and specialized cells. It depends on Mg(2+) as a cofactor.

It localises to the cytoplasm. The protein localises to the cytoskeleton. In terms of biological role, tubulin is the major constituent of microtubules, a cylinder consisting of laterally associated linear protofilaments composed of alpha- and beta-tubulin heterodimers. Microtubules grow by the addition of GTP-tubulin dimers to the microtubule end, where a stabilizing cap forms. Below the cap, tubulin dimers are in GDP-bound state, owing to GTPase activity of alpha-tubulin. This is Tubulin beta chain (tub-2) from Neurospora crassa (strain ATCC 24698 / 74-OR23-1A / CBS 708.71 / DSM 1257 / FGSC 987).